The chain runs to 159 residues: Large ribosomal subunit protein uL11 (159 aa).

This sequence belongs to the universal ribosomal protein uL11 family. As to quaternary structure, part of the ribosomal stalk of the 50S ribosomal subunit. Interacts with L10 and the large rRNA to form the base of the stalk. L10 forms an elongated spine to which L12 dimers bind in a sequential fashion forming a multimeric L10(L12)X complex.

Its function is as follows. Forms part of the ribosomal stalk which helps the ribosome interact with GTP-bound translation factors. The polypeptide is Large ribosomal subunit protein uL11 (Methanococcus maripaludis (strain DSM 14266 / JCM 13030 / NBRC 101832 / S2 / LL)).